The following is a 448-amino-acid chain: Protein Z-dependent protease inhibitor (448 aa).

An N-terminal signal peptide occupies residues 1-21 (MRVASSLFLPVLLTEVWLVTS). The tract at residues 33–70 (VHLESQDYENQTWEEYTRTDPREEEEEEEEKEEGKDEE) is disordered. Positions 54–63 (REEEEEEEEK) are enriched in acidic residues. Asn-81 carries N-linked (GlcNAc...) asparagine glycosylation. A heparin-binding region spans residues 140–157 (AGPLILPALFKKVKETFS). 3 N-linked (GlcNAc...) asparagine glycosylation sites follow: Asn-184, Asn-278, and Asn-299.

The protein belongs to the serpin family. Phosphorylated by FAM20C in the extracellular medium. Detectable in liver, but not in heart, brain, spleen, lung, kidney, skeletal muscle or testes.

The protein resides in the secreted. Inhibits activity of the coagulation protease factor Xa in the presence of PROZ, calcium and phospholipids. Also inhibits factor XIa in the absence of cofactors. This Mus musculus (Mouse) protein is Protein Z-dependent protease inhibitor (Serpina10).